Reading from the N-terminus, the 132-residue chain is uncharacterized protein (132 aa).

The chain crosses the membrane as a helical span at residues 10–30 (LVLFFTIILIALCPFVYYLWD). Residues 50–79 (KNCSTEIEHAIEEHKRKNKEKKEAKEKRLA) are a coiled coil.

It localises to the membrane. This is an uncharacterized protein from Invertebrate iridescent virus 6 (IIV-6).